Consider the following 219-residue polypeptide: Protein-L-isoaspartate O-methyltransferase 1 (219 aa).

Residue Ser-67 is part of the active site.

This sequence belongs to the methyltransferase superfamily. L-isoaspartyl/D-aspartyl protein methyltransferase family.

The protein localises to the cytoplasm. The catalysed reaction is [protein]-L-isoaspartate + S-adenosyl-L-methionine = [protein]-L-isoaspartate alpha-methyl ester + S-adenosyl-L-homocysteine. Functionally, catalyzes the methyl esterification of L-isoaspartyl residues in peptides and proteins that result from spontaneous decomposition of normal L-aspartyl and L-asparaginyl residues. It plays a role in the repair and/or degradation of damaged proteins. This is Protein-L-isoaspartate O-methyltransferase 1 from Geotalea uraniireducens (strain Rf4) (Geobacter uraniireducens).